Reading from the N-terminus, the 476-residue chain is Eukaryotic translation initiation factor 3 subunit L (476 aa).

Residues 257–452 form the PCI domain; the sequence is DAIRMFSHIL…DLDYALENDL (196 aa).

Belongs to the eIF-3 subunit L family. As to quaternary structure, component of the eukaryotic translation initiation factor 3 (eIF-3) complex.

The protein localises to the cytoplasm. Functionally, component of the eukaryotic translation initiation factor 3 (eIF-3) complex, which is involved in protein synthesis of a specialized repertoire of mRNAs and, together with other initiation factors, stimulates binding of mRNA and methionyl-tRNAi to the 40S ribosome. The eIF-3 complex specifically targets and initiates translation of a subset of mRNAs involved in cell proliferation. In Aspergillus clavatus (strain ATCC 1007 / CBS 513.65 / DSM 816 / NCTC 3887 / NRRL 1 / QM 1276 / 107), this protein is Eukaryotic translation initiation factor 3 subunit L.